The primary structure comprises 251 residues: V-set and transmembrane domain-containing protein 2B (251 aa).

Positions 1–25 (MEKQGLFSALCYLMLNTPLLFSVNA) are cleaved as a signal peptide. In terms of domain architecture, Ig-like V-type spans 26-142 (TFTEVPKDVT…DETQEHKAQA (117 aa)). Topologically, residues 26–226 (TFTEVPKDVT…RQQHGSGTGP (201 aa)) are extracellular. The cysteines at positions 46 and 125 are disulfide-linked. Positions 157–213 (AAEAVSHIQSSGPRRNNPSSRATPEPGNKRAVPPAENLAPSLSTAASSSASPAPGKA) are disordered. 2 stretches are compositionally biased toward low complexity: residues 166 to 177 (SSGPRRNNPSSR) and 195 to 213 (APSLSTAASSSASPAPGKA). The chain crosses the membrane as a helical span at residues 227–247 (IFANDPALYMFLLIFHQLVYL). At 248–251 (LLNH) the chain is on the cytoplasmic side.

Its subcellular location is the membrane. The sequence is that of V-set and transmembrane domain-containing protein 2B (vstm2b) from Xenopus tropicalis (Western clawed frog).